The chain runs to 74 residues: DNA-directed RNA polymerase subunit omega (74 aa).

The protein belongs to the RNA polymerase subunit omega family. In terms of assembly, the RNAP catalytic core consists of 2 alpha, 1 beta, 1 beta' and 1 omega subunit. When a sigma factor is associated with the core the holoenzyme is formed, which can initiate transcription.

It carries out the reaction RNA(n) + a ribonucleoside 5'-triphosphate = RNA(n+1) + diphosphate. Promotes RNA polymerase assembly. Latches the N- and C-terminal regions of the beta' subunit thereby facilitating its interaction with the beta and alpha subunits. This is DNA-directed RNA polymerase subunit omega from Helicobacter acinonychis (strain Sheeba).